Reading from the N-terminus, the 169-residue chain is Shikimate kinase (169 aa).

12-17 (GCGKST) is an ATP binding site. Residue Ser16 participates in Mg(2+) binding. Asp34, Arg57, and Gly79 together coordinate substrate. Arg116 lines the ATP pocket. Arg133 is a binding site for substrate.

This sequence belongs to the shikimate kinase family. In terms of assembly, monomer. Mg(2+) serves as cofactor.

It is found in the cytoplasm. It catalyses the reaction shikimate + ATP = 3-phosphoshikimate + ADP + H(+). Its pathway is metabolic intermediate biosynthesis; chorismate biosynthesis; chorismate from D-erythrose 4-phosphate and phosphoenolpyruvate: step 5/7. In terms of biological role, catalyzes the specific phosphorylation of the 3-hydroxyl group of shikimic acid using ATP as a cosubstrate. The polypeptide is Shikimate kinase (Clostridium beijerinckii (strain ATCC 51743 / NCIMB 8052) (Clostridium acetobutylicum)).